Reading from the N-terminus, the 574-residue chain is Serine hydroxymethyltransferase (574 aa).

Residue 180-182 participates in (6S)-5,6,7,8-tetrahydrofolate binding; sequence GHL. Lys-288 is modified (N6-(pyridoxal phosphate)lysine). Glu-306 is a binding site for (6S)-5,6,7,8-tetrahydrofolate.

Belongs to the SHMT family. As to quaternary structure, homodimer. It depends on pyridoxal 5'-phosphate as a cofactor.

It is found in the cytoplasm. It catalyses the reaction (6R)-5,10-methylene-5,6,7,8-tetrahydrofolate + glycine + H2O = (6S)-5,6,7,8-tetrahydrofolate + L-serine. Its pathway is one-carbon metabolism; tetrahydrofolate interconversion. It participates in amino-acid biosynthesis; glycine biosynthesis; glycine from L-serine: step 1/1. Catalyzes the reversible interconversion of serine and glycine with tetrahydrofolate (THF) serving as the one-carbon carrier. This reaction serves as the major source of one-carbon groups required for the biosynthesis of purines, thymidylate, methionine, and other important biomolecules. Also exhibits THF-independent aldolase activity toward beta-hydroxyamino acids, producing glycine and aldehydes, via a retro-aldol mechanism. The polypeptide is Serine hydroxymethyltransferase (Treponema pallidum (strain Nichols)).